We begin with the raw amino-acid sequence, 474 residues long: ATP synthase subunit beta 2 (474 aa).

Position 156-163 (156-163 (GGAGVGKT)) interacts with ATP.

This sequence belongs to the ATPase alpha/beta chains family. As to quaternary structure, F-type ATPases have 2 components, CF(1) - the catalytic core - and CF(0) - the membrane proton channel. CF(1) has five subunits: alpha(3), beta(3), gamma(1), delta(1), epsilon(1). CF(0) has three main subunits: a(1), b(2) and c(9-12). The alpha and beta chains form an alternating ring which encloses part of the gamma chain. CF(1) is attached to CF(0) by a central stalk formed by the gamma and epsilon chains, while a peripheral stalk is formed by the delta and b chains.

It is found in the cell inner membrane. It carries out the reaction ATP + H2O + 4 H(+)(in) = ADP + phosphate + 5 H(+)(out). Produces ATP from ADP in the presence of a proton gradient across the membrane. The catalytic sites are hosted primarily by the beta subunits. The protein is ATP synthase subunit beta 2 of Shewanella frigidimarina (strain NCIMB 400).